Consider the following 768-residue polypeptide: Disabled homolog 2 (768 aa).

Polar residues predominate over residues 1-16 (MSNEVETSTTNGQPDQ). Positions 1 to 36 (MSNEVETSTTNGQPDQQAAPKAPSKKEKKKGSEKTD) are disordered. Serine 2 bears the N-acetylserine mark. Serine 2 bears the Phosphoserine mark. Positions 45 to 196 (GDGVKYKAKL…KAEENGSEAL (152 aa)) constitute a PID domain. Tyrosine 170 carries the phosphotyrosine modification. Position 193 is a phosphoserine (serine 193). Positions 230–447 (ESRDILLVDL…KPGRGRRTAK (218 aa)) are required for localization to clathrin-coated pits. Positions 285–449 (NFFPTPNPDP…GRGRRTAKSS (165 aa)) are disordered. 2 consecutive short sequence motifs (DPF) follow at residues 293–295 (DPF) and 298–300 (DPF). 3 stretches are compositionally biased toward polar residues: residues 303–317 (PDQSAPSSFHSLTSA), 325–334 (GSLSTPQSKG), and 367–381 (PSSQTQQAVRTQNGV). Residues serine 326 and serine 328 each carry the phosphoserine; in mitosis modification. Serine 401 is subject to Phosphoserine. Residues 601–731 (TISTQSFPQP…GVLSGTKSAD (131 aa)) form a sufficient for interaction with GRB2 region. The segment at 619–627 (PPQPPPRNG) is required for interaction with CSK. The segment at 649–768 (KEVKEMFKDF…HRSPFGNPFA (120 aa)) is required for interaction with MYO6. Disordered stretches follow at residues 660–682 (LRQPPLVPSRKGETPSSGTSSAF) and 709–768 (NKIN…NPFA). The interval 663–671 (PPLVPSRKG) is required for interaction with GRB2 and CSK. Threonine 673 is subject to Phosphothreonine. Serine 675 is modified (phosphoserine). A sufficient for interaction with SH3KBP1 SH3 domain region spans residues 708 to 724 (LNKINEPPKPAPRQGVL). Polar residues predominate over residues 724–755 (LSGTKSADNSLENPFSKGFSSTNPSVVSQPAS). Phosphoserine occurs at positions 729 and 761.

Can interact (via PID domain) with LDLR, APP, APLP1 and APLP2, and weakly with INPP5D (via NPXY motifs); the interaction is impaired by tyrosine phosphorylation of the respective NPXY motifs. Can weakly interact (via PID domain) with LRP1 (via NPXY motif); the interaction is enhanced by tyrosine phosphorylation of the NPXY motif. Interacts with LRP2 (via NPXY motif); the interaction is not affected by tyrosine phosphorylation of the NPXY motif. Interacts with clathrin; in vitro can assemble clathrin triskelia into polyhedral coats. Interacts with AP2A2, ITGB1, ITGB3, ITGB5, PIAS2, DAB2IP, NOSTRIN, FCHO1, DVL3, EPS15, ITSN1 and EPS15L1. Interacts with SH3KBP1 (via SH3 domains). Interacts with GRB2; competes with SOS1 for binding to GRB2 and the interaction is enhanced by EGF and NT-3 stimulation. Interacts with MAP3K7; the interaction is induced by TGF-beta stimulation and may mediate TGF-beta stimulated JNK activation. Interacts with AXIN1 and PPP1CA; the interactions are mutually exclusive. Interacts with the globular tail of MYO6. Interacts (via DPF motifs) with FCHO2; the interaction is direct and required for DAB2-mediated LDLR endocytosis. Interacts with LRP6; the interaction involves LRP6 phosphorylation by CK2 and sequesters LRP6 towards clathrin-mediated endocytosis. Associates with the TGF-beta receptor complex. Interacts with SMAD2 and SMAD3; the interactions are enhanced upon TGF-beta stimulation. Interacts with GRB2; the interaction is enhanced by EGF and NT-3 stimulation. Interacts with SRC; the interaction is enhanced by EGF stimulation. Interacts with GRB2; the interaction is enhanced by EGF and NT-3 stimulation. Interacts (via NPXY motif) with DAB2 (via PID domain). In terms of processing, phosphorylated. Phosphorylation during mitosis is leading to membrane displacement. There is some ambiguity for the mitotic phosphosite Ser-326/328. Prostate.

The protein localises to the cytoplasm. It is found in the cytoplasmic vesicle. The protein resides in the clathrin-coated vesicle membrane. It localises to the membrane. Its subcellular location is the clathrin-coated pit. Its function is as follows. Adapter protein that functions as a clathrin-associated sorting protein (CLASP) required for clathrin-mediated endocytosis of selected cargo proteins. Can bind and assemble clathrin, and binds simultaneously to phosphatidylinositol 4,5-bisphosphate (PtdIns(4,5)P2) and cargos containing non-phosphorylated NPXY internalization motifs, such as the LDL receptor, to recruit them to clathrin-coated pits. Can function in clathrin-mediated endocytosis independently of the AP-2 complex. Involved in endocytosis of integrin beta-1; this function seems to redundant with the AP-2 complex and seems to require DAB2 binding to endocytosis accessory EH domain-containing proteins such as EPS15, EPS15L1 and ITSN1. Involved in endocytosis of cystic fibrosis transmembrane conductance regulator/CFTR. Involved in endocytosis of megalin/LRP2 lipoprotein receptor during embryonal development. Required for recycling of the TGF-beta receptor. Involved in CFTR trafficking to the late endosome. Involved in several receptor-mediated signaling pathways. Involved in TGF-beta receptor signaling and facilitates phosphorylation of the signal transducer SMAD2. Mediates TFG-beta-stimulated JNK activation. May inhibit the canoniocal Wnt/beta-catenin signaling pathway by stabilizing the beta-catenin destruction complex through a competing association with axin preventing its dephosphorylation through protein phosphatase 1 (PP1). Sequesters LRP6 towards clathrin-mediated endocytosis, leading to inhibition of Wnt/beta-catenin signaling. May activate non-canonical Wnt signaling. In cell surface growth factor/Ras signaling pathways proposed to inhibit ERK activation by interrupting the binding of GRB2 to SOS1 and to inhibit SRC by preventing its activating phosphorylation at 'Tyr-419'. Proposed to be involved in modulation of androgen receptor (AR) signaling mediated by SRC activation; seems to compete with AR for interaction with SRC. Plays a role in the CSF-1 signal transduction pathway. Plays a role in cellular differentiation. Involved in cell positioning and formation of visceral endoderm (VE) during embryogenesis and proposed to be required in the VE to respond to Nodal signaling coming from the epiblast. Required for the epithelial to mesenchymal transition, a process necessary for proper embryonic development. May be involved in myeloid cell differentiation and can induce macrophage adhesion and spreading. May act as a tumor suppressor. This chain is Disabled homolog 2 (Dab2), found in Rattus norvegicus (Rat).